Here is a 360-residue protein sequence, read N- to C-terminus: 3-dehydroquinate synthase (360 aa).

Residues 71 to 76 (DGEQYK), 105 to 109 (GVVGD), 129 to 130 (TT), Lys142, Lys151, and 169 to 172 (TLNT) contribute to the NAD(+) site. The Zn(2+) site is built by Glu184, His248, and His265.

This sequence belongs to the sugar phosphate cyclases superfamily. Dehydroquinate synthase family. Co(2+) serves as cofactor. Zn(2+) is required as a cofactor. Requires NAD(+) as cofactor.

Its subcellular location is the cytoplasm. The catalysed reaction is 7-phospho-2-dehydro-3-deoxy-D-arabino-heptonate = 3-dehydroquinate + phosphate. The protein operates within metabolic intermediate biosynthesis; chorismate biosynthesis; chorismate from D-erythrose 4-phosphate and phosphoenolpyruvate: step 2/7. In terms of biological role, catalyzes the conversion of 3-deoxy-D-arabino-heptulosonate 7-phosphate (DAHP) to dehydroquinate (DHQ). This chain is 3-dehydroquinate synthase, found in Coxiella burnetii (strain CbuK_Q154) (Coxiella burnetii (strain Q154)).